The sequence spans 295 residues: Lectin 11 (295 aa).

Topologically, residues 1–22 (MHYSHFYFIINNTNMTINAIPK) are cytoplasmic. A helical transmembrane segment spans residues 23 to 45 (LFATKNSISLSIVIFMYLLILVA). Residues 46-295 (NVKSDSSFNF…ILSWSFTSNM (250 aa)) lie on the Extracellular side of the membrane. A glycan (N-linked (GlcNAc...) asparagine) is linked at Asn152.

The protein belongs to the leguminous lectin family.

The protein localises to the membrane. In terms of biological role, may be involved in arbuscular mycorrhizal (AM) symbiosis with AM fungi. In Medicago truncatula (Barrel medic), this protein is Lectin 11.